We begin with the raw amino-acid sequence, 1258 residues long: Cohesin subunit SA-1 (1258 aa).

The tract at residues 1–84 is disordered; that stretch reads MITSELPVLQ…HPQQNGEGEP (84 aa). The span at 10–19 shows a compositional bias: polar residues; that stretch reads QDSTNETTAH. Residue Ser24 is modified to Phosphoserine. Over residues 53–62 the composition is skewed to basic and acidic residues; it reads SPGEKSRIEA. The SCD domain maps to 296–381; that stretch reads FVHRYRDAIA…NRFKDRIVSM (86 aa). Phosphoserine occurs at positions 756, 1062, and 1065. Disordered regions lie at residues 1055 to 1096 and 1129 to 1148; these read GGED…SLDN and MGDQ…DFLH. Low complexity predominate over residues 1062–1074; the sequence is SVNSGSSSSKTSS. Residues 1076–1087 show a composition bias toward basic residues; that stretch reads RNKKGRPPLHKK. Ser1093 is subject to Phosphoserine. The segment covering 1137–1146 has biased composition (basic and acidic residues); it reads ESEHGSEPDF. Residue Lys1161 forms a Glycyl lysine isopeptide (Lys-Gly) (interchain with G-Cter in SUMO2) linkage.

Belongs to the SCC3 family. Cohesin complexes are composed of a heterodimer between a SMC1 protein (SMC1A or SMC1B) and SMC3, which are attached via their hinge domain, and RAD21 which link them at their heads, and one STAG protein (STAG1, STAG2 or STAG3). In cohesin complexes, STAG1 is mutually exclusive with STAG2 and STAG3. Interacts directly with RAD21 in cohesin complex. The cohesin complex interacts with the cohesin loading complex subunits NIPBL/Scc2 (via HEAT repeats) and MAU2/Scc4. NIPBL directly contacts all members of the complex, RAD21, SMC1A/B, SMC3 and STAG1. Post-translationally, phosphorylated by PLK1. The large dissociation of cohesin from chromosome arms during prophase is partly due to its phosphorylation.

It is found in the nucleus. The protein localises to the chromosome. It localises to the centromere. Component of cohesin complex, a complex required for the cohesion of sister chromatids after DNA replication. The cohesin complex apparently forms a large proteinaceous ring within which sister chromatids can be trapped. At anaphase, the complex is cleaved and dissociates from chromatin, allowing sister chromatids to segregate. The cohesin complex may also play a role in spindle pole assembly during mitosis. This Homo sapiens (Human) protein is Cohesin subunit SA-1 (STAG1).